The following is a 146-amino-acid chain: Small ribosomal subunit protein uS9 (146 aa).

Serine 3 carries the phosphoserine modification. An N6-acetyllysine modification is found at lysine 60.

Belongs to the universal ribosomal protein uS9 family. Component of the small ribosomal subunit. Part of the small subunit (SSU) processome, composed of more than 70 proteins and the RNA chaperone small nucleolar RNA (snoRNA) U3.

The protein resides in the cytoplasm. Its subcellular location is the nucleus. It is found in the nucleolus. Component of the small ribosomal subunit. The ribosome is a large ribonucleoprotein complex responsible for the synthesis of proteins in the cell. Part of the small subunit (SSU) processome, first precursor of the small eukaryotic ribosomal subunit. During the assembly of the SSU processome in the nucleolus, many ribosome biogenesis factors, an RNA chaperone and ribosomal proteins associate with the nascent pre-rRNA and work in concert to generate RNA folding, modifications, rearrangements and cleavage as well as targeted degradation of pre-ribosomal RNA by the RNA exosome. The protein is Small ribosomal subunit protein uS9 (RPS16) of Bos taurus (Bovine).